Here is a 98-residue protein sequence, read N- to C-terminus: Cell division protein FtsB (98 aa).

Residues 1 to 3 lie on the Cytoplasmic side of the membrane; that stretch reads MKR. The chain crosses the membrane as a helical span at residues 4-21; sequence LLFVLIALLAMLQYRLWL. The Periplasmic portion of the chain corresponds to 22–98; the sequence is GDKSLADSFH…GGERGGVPEN (77 aa). Positions 31–74 form a coiled coil; that stretch reads HLQEQIKLQQQSNAQLVARNQVLREEISDLRSGTEALEERARNE.

The protein belongs to the FtsB family. In terms of assembly, part of a complex composed of FtsB, FtsL and FtsQ.

Its subcellular location is the cell inner membrane. In terms of biological role, essential cell division protein. May link together the upstream cell division proteins, which are predominantly cytoplasmic, with the downstream cell division proteins, which are predominantly periplasmic. This chain is Cell division protein FtsB, found in Shewanella pealeana (strain ATCC 700345 / ANG-SQ1).